Here is a 91-residue protein sequence, read N- to C-terminus: Defensin-like protein 82 (91 aa).

The N-terminal stretch at methionine 1 to glycine 27 is a signal peptide. 4 disulfides stabilise this stretch: cysteine 34–cysteine 72, cysteine 41–cysteine 62, cysteine 47–cysteine 70, and cysteine 51–cysteine 71.

The protein belongs to the DEFL family.

The protein localises to the secreted. In Arabidopsis thaliana (Mouse-ear cress), this protein is Defensin-like protein 82.